The chain runs to 313 residues: MTIRNQRFSLLKQPISSTLNQHLVDYPTPSNLSYWWGFGPLAGTMILSVLSSPALVSGLMVARAKNLVHSVLFPIPIFFSINQLFHYFCRLPIIKHLATKCQLLLFLISHFLLLLVLTKLVLDLGGYLFMDDLSRALSQFVPGFSGGLGGGSNTPPNPSGDFFLSSYQTSDPDYHDQRRGDSYFSSAPGVQETHRHASGSSTNLHLNLNDQSQDPIFLEVERLSLKCDKVKEKTILKTQSLLLERGYHIPDERDIERAINVVMTEHETIDIDRRRKRFYYLYSCLGKTGNKFWMELLETLADYNINIKSDSDN.

3 helical membrane-spanning segments follow: residues 41–61, 68–88, and 102–122; these read LAGT…GLMV, VHSV…FHYF, and QLLL…KLVL.

Belongs to the cytochrome b family.

The protein resides in the mitochondrion membrane. This is an uncharacterized protein from Arabidopsis thaliana (Mouse-ear cress).